We begin with the raw amino-acid sequence, 473 residues long: Photosystem II CP43 reaction center protein (473 aa).

The propeptide occupies 1–14; it reads MKTLYSLRRFYPVE. Thr-15 carries the post-translational modification N-acetylthreonine. Phosphothreonine is present on Thr-15. The next 5 membrane-spanning stretches (helical) occupy residues 69-93, 134-155, 178-200, 255-275, and 291-312; these read LFEVAHFVPEKPMYEQGLILLPHLA, LIGPETLEESFPFFGYVWKDRN, KALYFGGIYDTWAPGGGDVRKIT, KPFAWARRAFVWSGEAYLSYS, and WFNNTAYPSEFYGPTGPEASQA. Glu-367 contributes to the [CaMn4O5] cluster binding site. The helical transmembrane segment at 447 to 471 threads the bilayer; sequence RARAAAAGFEKGIDRDFEPVLSMTP.

This sequence belongs to the PsbB/PsbC family. PsbC subfamily. In terms of assembly, PSII is composed of 1 copy each of membrane proteins PsbA, PsbB, PsbC, PsbD, PsbE, PsbF, PsbH, PsbI, PsbJ, PsbK, PsbL, PsbM, PsbT, PsbX, PsbY, PsbZ, Psb30/Ycf12, at least 3 peripheral proteins of the oxygen-evolving complex and a large number of cofactors. It forms dimeric complexes. Binds multiple chlorophylls and provides some of the ligands for the Ca-4Mn-5O cluster of the oxygen-evolving complex. It may also provide a ligand for a Cl- that is required for oxygen evolution. PSII binds additional chlorophylls, carotenoids and specific lipids. is required as a cofactor.

Its subcellular location is the plastid. The protein localises to the chloroplast thylakoid membrane. One of the components of the core complex of photosystem II (PSII). It binds chlorophyll and helps catalyze the primary light-induced photochemical processes of PSII. PSII is a light-driven water:plastoquinone oxidoreductase, using light energy to abstract electrons from H(2)O, generating O(2) and a proton gradient subsequently used for ATP formation. The chain is Photosystem II CP43 reaction center protein from Cryptomeria japonica (Japanese cedar).